A 444-amino-acid chain; its full sequence is MSLNPSRPSSSELVELHVFYVPEGSWNYKLNTISIEVINNFISAGFIRVSPQLTLQALRERLGEFLGVDAVAEKFLFLKCIGNNLAVVKEKQESELKLKSFAPPYALQPELYLLPVIDHLGNVYSASTVNLDEQQSVDDTMEIDGTIHRPDSLSLSKDEPGDPSLLENTWRDFPNHEEAEESQPTQQHFGNPRLPGSLEESDDCLGNVKSPFLWKNNDEDEGEEDDKATINRRQAKLVCDKEHSALPDLIDFPSFPSQRVSSRLVDTSLLKIEREKIIEQMKQVKEERKYLENIREELIKKVEKLFEQSKSKRYHACDSWKKKYFDTKKVTASLEEVLTKLREDLELYYKKLLMQLEAREIKMRPRNLANISDSKNYLIIQITEVQHAIDQLKRKLDTDKMKLILEVKMRKQAASDLQTLRADLTQKKMGTPFRSPIFSGSVPT.

The span at 145–160 (GTIHRPDSLSLSKDEP) shows a compositional bias: basic and acidic residues. The segment at 145-229 (GTIHRPDSLS…DEGEEDDKAT (85 aa)) is disordered. Residues 268 to 403 (SLLKIEREKI…RKLDTDKMKL (136 aa)) adopt a coiled-coil conformation.

In terms of assembly, interacts with IFT20.

The protein resides in the cytoplasmic vesicle. It localises to the secretory vesicle. Its subcellular location is the acrosome. The polypeptide is Spermatogenesis-associated protein 1 (Spata1) (Rattus norvegicus (Rat)).